Consider the following 112-residue polypeptide: Cryptic phage CTXphi transcriptional repressor RstR (112 aa).

One can recognise an HTH cro/C1-type domain in the interval 7–61; the sequence is LANQRKAINKTQAQMADEIGISLTSYKKYESGEGLPTMENLVKIADALEISIDEL. Positions 18–37 form a DNA-binding region, H-T-H motif; the sequence is QAQMADEIGISLTSYKKYES.

Transcriptional repressor of the integrated CTXPhi phage gene rstA2. This chain is Cryptic phage CTXphi transcriptional repressor RstR (rstR1), found in Vibrio cholerae serotype O1 (strain ATCC 39315 / El Tor Inaba N16961).